The following is a 159-amino-acid chain: Capsid protein (159 aa).

Ser2 carries the N-acetylserine; by host modification.

Belongs to the virgaviridae capsid protein family.

Its subcellular location is the virion. Functionally, capsid protein self-assembles to form rod-shaped virions about 18 nm in diameter with a central canal enclosing the viral genomic RNA. The polypeptide is Capsid protein (CP) (Nicotiana tabacum (Common tobacco)).